We begin with the raw amino-acid sequence, 468 residues long: Putative chitinase 1 (468 aa).

Positions 1–21 are cleaved as a signal peptide; the sequence is MDFYSSLLPFLILIYLEFCSG. The region spanning 22–381 is the GH18 domain; it reads FNRVCYYNGW…MSIIHGLGEY (360 aa). An intrachain disulfide couples cysteine 26 to cysteine 51. Chitin-binding positions include 73 to 74 and 100 to 103; these read VF and GGWD. Catalysis depends on glutamate 143, which acts as the Proton donor. Residues tyrosine 144, 213–216, and tryptophan 353 each bind chitin; that span reads KMYD. Residues 386–440 adopt a coiled-coil conformation; sequence SDTLEAEREMINKKIRKAAREISYYSDKGNSTMAKKMEDKLNQLKDHLSAVQAHQ.

The protein belongs to the glycosyl hydrolase 18 family. In terms of tissue distribution, prismatic layer of shell (at protein level). Expressed primarily in the mantle with highest level in the outer epithelium of the mantle edge and lower level in the mantle pallium.

It is found in the secreted. It carries out the reaction Random endo-hydrolysis of N-acetyl-beta-D-glucosaminide (1-&gt;4)-beta-linkages in chitin and chitodextrins.. The sequence is that of Putative chitinase 1 from Margaritifera margaritifera (Freshwater pearl mussel).